The following is a 334-amino-acid chain: Glyoxylate reductase (334 aa).

NADP(+) contacts are provided by residues 158–161 (FGRI), 180–182 (SRT), and 239–241 (IAR). Active-site residues include arginine 241 and glutamate 270. The active-site Proton donor is the histidine 288. NADP(+) is bound at residue 288-290 (HIG).

Belongs to the D-isomer specific 2-hydroxyacid dehydrogenase family. GyaR subfamily. As to quaternary structure, homodimer.

Its subcellular location is the cytoplasm. It catalyses the reaction glycolate + NAD(+) = glyoxylate + NADH + H(+). The sequence is that of Glyoxylate reductase from Thermococcus onnurineus (strain NA1).